Reading from the N-terminus, the 438-residue chain is MTAQTSSDVTDQKTDLTRESERDEVLAKATLAKKVAPEIAQLGTGVKNQILLAAAEALLERSAEIIEANSRDIAAGRESGMAESLIDRLALDEGRIEGIAGGLRQVAGLTDPVGEVLQGRVMENGIQMRQVRVPLGVMGMVYEARPNVTVDAFGLALKSGNVALLRGSSTAVHSNTTLVGILQDVLATFDLPRETVQLLPCATRESVQDLITARGLVDVVIPRGGAGLINAVVMGATVPTIETGTGNCHFYIDGDVDVDSAIAMLINGKTRRCSVCNATETALIDSALPDVDKLRVVRALQDAGVTVHGRVAELEAFGATDVVEATENDWDSEYLSFDIAVAVVDGVDAAIEHIEKYSTHHTEAIATNNVFTAQRFADHVDAAAVMINASTAFTDGEQYGMGAEIGISTQKLHARGPMALPELTSTKWILQGTGHTRP.

Residues 1-21 (MTAQTSSDVTDQKTDLTRESE) form a disordered region. Residues 10 to 21 (TDQKTDLTRESE) show a composition bias toward basic and acidic residues.

It belongs to the gamma-glutamyl phosphate reductase family.

It is found in the cytoplasm. The enzyme catalyses L-glutamate 5-semialdehyde + phosphate + NADP(+) = L-glutamyl 5-phosphate + NADPH + H(+). It participates in amino-acid biosynthesis; L-proline biosynthesis; L-glutamate 5-semialdehyde from L-glutamate: step 2/2. Catalyzes the NADPH-dependent reduction of L-glutamate 5-phosphate into L-glutamate 5-semialdehyde and phosphate. The product spontaneously undergoes cyclization to form 1-pyrroline-5-carboxylate. This Corynebacterium efficiens (strain DSM 44549 / YS-314 / AJ 12310 / JCM 11189 / NBRC 100395) protein is Gamma-glutamyl phosphate reductase.